The sequence spans 72 residues: Small ribosomal subunit protein bS18 (72 aa).

It belongs to the bacterial ribosomal protein bS18 family. As to quaternary structure, part of the 30S ribosomal subunit. Forms a tight heterodimer with protein bS6.

In terms of biological role, binds as a heterodimer with protein bS6 to the central domain of the 16S rRNA, where it helps stabilize the platform of the 30S subunit. The polypeptide is Small ribosomal subunit protein bS18 (Trichodesmium erythraeum (strain IMS101)).